The following is a 600-amino-acid chain: NADH-quinone oxidoreductase subunit C/D (600 aa).

Residues 1–190 (MVNNMTDLTA…SPFELTKAKQ (190 aa)) form an NADH dehydrogenase I subunit C region. The NADH dehydrogenase I subunit D stretch occupies residues 214–600 (DFMFLNLGPN…IDFVMSDVDR (387 aa)).

The protein in the N-terminal section; belongs to the complex I 30 kDa subunit family. It in the C-terminal section; belongs to the complex I 49 kDa subunit family. In terms of assembly, NDH-1 is composed of 13 different subunits. Subunits NuoB, CD, E, F, and G constitute the peripheral sector of the complex.

It is found in the cell inner membrane. The enzyme catalyses a quinone + NADH + 5 H(+)(in) = a quinol + NAD(+) + 4 H(+)(out). Its function is as follows. NDH-1 shuttles electrons from NADH, via FMN and iron-sulfur (Fe-S) centers, to quinones in the respiratory chain. The immediate electron acceptor for the enzyme in this species is believed to be ubiquinone. Couples the redox reaction to proton translocation (for every two electrons transferred, four hydrogen ions are translocated across the cytoplasmic membrane), and thus conserves the redox energy in a proton gradient. In Escherichia coli (strain K12 / DH10B), this protein is NADH-quinone oxidoreductase subunit C/D.